The primary structure comprises 229 residues: Chloride conductance regulatory protein ICln (229 aa).

Belongs to the pICln (TC 1.A.47) family. Homooligomer.

It localises to the cytoplasm. Its subcellular location is the nucleus. May participate in cellular volume control by activation of a swelling-induced chloride conductance pathway. This is Chloride conductance regulatory protein ICln from Arabidopsis thaliana (Mouse-ear cress).